We begin with the raw amino-acid sequence, 622 residues long: Chaperone protein DnaK (622 aa).

Thr-197 is subject to Phosphothreonine; by autocatalysis. Basic and acidic residues-rich tracts occupy residues 515-528 (LHKE…EAVE) and 575-614 (ASKE…KKDD). Disordered stretches follow at residues 515 to 537 (LHKE…DSLV) and 575 to 622 (ASKE…AEVE).

The protein belongs to the heat shock protein 70 family.

In terms of biological role, acts as a chaperone. This chain is Chaperone protein DnaK, found in Campylobacter lari (strain RM2100 / D67 / ATCC BAA-1060).